The primary structure comprises 204 residues: Leucyl/phenylalanyl-tRNA--protein transferase (204 aa).

It belongs to the L/F-transferase family.

Its subcellular location is the cytoplasm. The catalysed reaction is N-terminal L-lysyl-[protein] + L-leucyl-tRNA(Leu) = N-terminal L-leucyl-L-lysyl-[protein] + tRNA(Leu) + H(+). It carries out the reaction N-terminal L-arginyl-[protein] + L-leucyl-tRNA(Leu) = N-terminal L-leucyl-L-arginyl-[protein] + tRNA(Leu) + H(+). It catalyses the reaction L-phenylalanyl-tRNA(Phe) + an N-terminal L-alpha-aminoacyl-[protein] = an N-terminal L-phenylalanyl-L-alpha-aminoacyl-[protein] + tRNA(Phe). Its function is as follows. Functions in the N-end rule pathway of protein degradation where it conjugates Leu, Phe and, less efficiently, Met from aminoacyl-tRNAs to the N-termini of proteins containing an N-terminal arginine or lysine. This Rhizobium leguminosarum bv. trifolii (strain WSM2304) protein is Leucyl/phenylalanyl-tRNA--protein transferase.